The following is a 654-amino-acid chain: Protein LYK2 (654 aa).

The signal sequence occupies residues 1 to 25; that stretch reads MAVSVSKQYMTSLVVILLFISLSSL. Residues 26–241 are Extracellular-facing; sequence SPTSTSHSCD…PSKKKRSKMK (216 aa). Cystine bridges form between cysteine 50–cysteine 102, cysteine 57–cysteine 163, and cysteine 100–cysteine 161. Residues asparagine 103, asparagine 170, asparagine 193, and asparagine 204 are each glycosylated (N-linked (GlcNAc...) asparagine). One copy of the LysM; degenerate repeat lies at 177-217; the sequence is YPVGVRDSVSSLAVRFNTTEDAIVSANNKSGVVPLKPALIP. Residues 218–238 are disordered; sequence LDHKPEKQGSRKRNPSKKKRS. The segment covering 227–238 has biased composition (basic residues); it reads SRKRNPSKKKRS. The chain crosses the membrane as a helical span at residues 242 to 262; the sequence is LMIAVSSAIAGVCGLVTLMVF. Topologically, residues 263–654 are cytoplasmic; sequence GYLHWKKETQ…PLVKKSSIID (392 aa). The Protein kinase domain occupies 324–619; the sequence is TPRKPVLEIY…EIAERVSRLV (296 aa). ATP contacts are provided by residues 330 to 338 and lysine 368; that span reads LEIYAFEEL.

This sequence belongs to the protein kinase superfamily. Ser/Thr protein kinase family.

The protein localises to the cell membrane. Functionally, may recognize microbe-derived N-acetylglucosamine (NAG)-containing ligands. The chain is Protein LYK2 (LYK2) from Arabidopsis thaliana (Mouse-ear cress).